Consider the following 402-residue polypeptide: Zinc finger protein CONSTANS-LIKE 14 (402 aa).

Zn(2+) contacts are provided by Cys12, Cys15, Cys35, His40, Cys55, Cys58, Cys78, and His83. The segment at 12 to 54 (CEFCGERTAVLFCRADTAKLCLPCDQHVHSANLLSRKHVRSQI) adopts a B box-type 1; atypical zinc-finger fold. The B box-type 2; atypical zinc-finger motif lies at 55 to 97 (CDNCSKEPVSVRCFTDNLVLCQECDWDVHGSCSSSATHERSAV). The disordered stretch occupies residues 287–322 (SYQQEDSVHSTSTKGQETSKSNNIPAAIHSHKSSND). Residues 295–310 (HSTSTKGQETSKSNNI) show a composition bias toward polar residues. The stretch at 345–372 (VTNADLEQMAQNRDNAMQRYKEKKKTRR) forms a coiled coil. In terms of domain architecture, CCT spans 357–399 (RDNAMQRYKEKKKTRRYDKTIRYETRKARAETRLRVKGRFVKA).

The protein belongs to the CONSTANS family.

It is found in the nucleus. This Arabidopsis thaliana (Mouse-ear cress) protein is Zinc finger protein CONSTANS-LIKE 14 (COL14).